Reading from the N-terminus, the 94-residue chain is DNA-directed RNA polymerase subunit omega (94 aa).

This sequence belongs to the RNA polymerase subunit omega family. As to quaternary structure, consists of a sigma factor and the RNAP core enzyme which is composed of 2 alpha chains, 1 beta chain, 1 beta' chain and 1 subunit omega.

It catalyses the reaction RNA(n) + a ribonucleoside 5'-triphosphate = RNA(n+1) + diphosphate. Functionally, promotes RNA polymerase assembly. Latches the N- and C-terminal regions of the beta' subunit thereby facilitating its interaction with the beta and alpha subunits. This chain is DNA-directed RNA polymerase subunit omega, found in Shewanella violacea (strain JCM 10179 / CIP 106290 / LMG 19151 / DSS12).